The chain runs to 158 residues: Large ribosomal subunit protein uL13 (158 aa).

The tract at residues 129–158 (PEHGHHAQKPVALDFGAMNNKNGRGNNAGR) is disordered. Residues 144–158 (GAMNNKNGRGNNAGR) show a composition bias toward low complexity.

Belongs to the universal ribosomal protein uL13 family. Part of the 50S ribosomal subunit.

This protein is one of the early assembly proteins of the 50S ribosomal subunit, although it is not seen to bind rRNA by itself. It is important during the early stages of 50S assembly. The chain is Large ribosomal subunit protein uL13 from Anaplasma phagocytophilum (strain HZ).